A 546-amino-acid chain; its full sequence is Nicotinic acid-CoA ligase olcI (546 aa).

194–205 (MFSTSGTSGLPK) contacts AMP. An AMP-binding region spans residues 445–523 (EIEAVLLKDP…ESLPRTGIGK (79 aa)).

Belongs to the ATP-dependent AMP-binding enzyme family.

The catalysed reaction is nicotinate + ATP + CoA = nicotinyl-CoA + AMP + diphosphate. The protein operates within secondary metabolite biosynthesis; terpenoid biosynthesis. Nicotinic acid-CoA ligase; part of the gene cluster that mediates the biosynthesis of 15-deoxyoxalicine B. The first step of the pathway is the synthesis of nicotinyl-CoA from nicotinic acid by the nicotinic acid-CoA ligase olcI. Nicotinyl-CoA is then a substrate of polyketide synthase olcA to produce 4-hydroxy-6-(3-pyridinyl)-2H-pyran-2-one (HPPO) which is further prenylated by the polyprenyl transferase olcH to yield geranylgeranyl-HPPO. Geranylgeranyl pyrophosphate is provided by the cluster-specific geranylgeranyl pyrophosphate synthase olcC. The FAD-dependent monooxygenase olcE catalyzes the epoxidation of geranylgeranyl-HPPO and the terpene cyclase olcD catalyzes the cyclization of the terpenoid component, resulting in the formation of the tricyclic terpene moiety seen in predecaturin E. The cytochrome P450 monooxygenase then catalyzes the allylic oxidation of predecaturin E, which is followed by spirocylization with concomitant loss of one molecule of water to form decaturin E. Decaturin E is the substrate of the cytochrome P450 monooxygenase olcJ which hydroxylates it at the C-29 position to form decaturin F. The short-chain dehydrogenase/reductase olcF may catalyze the oxidation of decaturin F to generate the 29-hydroxyl-27-one intermediate, and subsequent hemiacetal formation probably leads to the formation of decaturin C. The dioxygenase olcK may be a peroxisomal enzyme that catalyzes the hydroxylation of decaturin C into decaturin A once decaturin C is shuttled into the peroxisome by the MFS transporter olcL. Finally the cytochrome P450 monooxygenase olcB catalyzes the oxidative rearrangement to yield 15-deoxyoxalicine B. In the absence of olcJ, decaturin E may be shunted to a pathway in which it is oxidized to a ketone, possibly by olcF, to form decaturin D, which undergoes further allylic oxidation to yield decaturin G. Moreover, in the absence of oclK or oclL, oclB can convert decaturin C into 15-deoxyoxalicine A. The protein is Nicotinic acid-CoA ligase olcI of Penicillium canescens.